A 162-amino-acid chain; its full sequence is Necrosis-inducing secreted protein 1 (162 aa).

A signal peptide spans 1 to 19 (MQFLTSLAAAASLVSLASA). Residues N88, N126, N133, and N150 are each glycosylated (N-linked (GlcNAc...) asparagine). The BAK1/SERK3-binding stretch occupies residues 103-132 (EYVIAASLFSLYGASSSPTVSNYNVTVNVG).

Belongs to the NIS1 effector family. In terms of assembly, interacts with the host pattern recognition receptor (PRR)-associated kinases BAK1/SERK3, BKK1/SERK4 and BIK1.

The protein resides in the secreted. The protein localises to the host cytoplasm. Secreted effector that induces necrotic lesions in Nicotiana benthamiana. Interacts with the host receptor-like kinases (RLKs) BAK1/SERK3 and BKK1/SERK4, inhibits their kinase activity and suppresses INF1-induced pathogen-associated molecular pattern (PAMP)-triggered immunity (PTI) in N.benthamiana. Also interacts with the host receptor-like cytoplasmic kinase (RLCK) BIK1 and inhibits its kinase activity, thereby inhibiting PAMP-induced ROS generation. In PTI, phosphorylation relaying by RLKs and RLCKs is critical for the initiation of downstream signaling. This Colletotrichum orbiculare (strain 104-T / ATCC 96160 / CBS 514.97 / LARS 414 / MAFF 240422) (Cucumber anthracnose fungus) protein is Necrosis-inducing secreted protein 1.